The primary structure comprises 878 residues: Phosphoenolpyruvate carboxylase (878 aa).

Active-site residues include histidine 138 and lysine 545.

This sequence belongs to the PEPCase type 1 family. Requires Mg(2+) as cofactor.

It carries out the reaction oxaloacetate + phosphate = phosphoenolpyruvate + hydrogencarbonate. Its function is as follows. Forms oxaloacetate, a four-carbon dicarboxylic acid source for the tricarboxylic acid cycle. The polypeptide is Phosphoenolpyruvate carboxylase (Shewanella loihica (strain ATCC BAA-1088 / PV-4)).